Consider the following 539-residue polypeptide: Putative cysteine ligase BshC (539 aa).

ADP-binding positions include serine 146 and 384–386; that span reads ERH. Residues 455-475 adopt a coiled-coil conformation; the sequence is LLKNAAFIQDQLQFLERTVMK. ADP-binding positions include 490–493, tryptophan 506, and tyrosine 510; that span reads RIQN.

It belongs to the BshC family. Homodimer in solution.

Its function is as follows. Involved in bacillithiol (BSH) biosynthesis. May catalyze the last step of the pathway, the addition of cysteine to glucosamine malate (GlcN-Mal) to generate BSH. The sequence is that of Putative cysteine ligase BshC from Bacillus subtilis (strain 168).